A 298-amino-acid chain; its full sequence is Glutamyl-Q tRNA(Asp) synthetase (298 aa).

L-glutamate-binding positions include 12-16 (RFAPT) and glutamate 48. Positions 15-25 (PTPSGYLHFGS) match the 'HIGH' region motif. 4 residues coordinate Zn(2+): cysteine 104, cysteine 106, tyrosine 118, and cysteine 122. Residues tyrosine 175 and arginine 193 each contribute to the L-glutamate site. A 'KMSKS' region motif is present at residues 231–235 (KLGKS). Residue lysine 234 participates in ATP binding.

Belongs to the class-I aminoacyl-tRNA synthetase family. GluQ subfamily. Zn(2+) is required as a cofactor.

In terms of biological role, catalyzes the tRNA-independent activation of glutamate in presence of ATP and the subsequent transfer of glutamate onto a tRNA(Asp). Glutamate is transferred on the 2-amino-5-(4,5-dihydroxy-2-cyclopenten-1-yl) moiety of the queuosine in the wobble position of the QUC anticodon. In Pseudomonas fluorescens (strain ATCC BAA-477 / NRRL B-23932 / Pf-5), this protein is Glutamyl-Q tRNA(Asp) synthetase.